We begin with the raw amino-acid sequence, 171 residues long: RNA pyrophosphohydrolase (171 aa).

The Nudix hydrolase domain occupies glycine 6 to lysine 149. The Nudix box signature appears at glycine 39–glycine 60.

The protein belongs to the Nudix hydrolase family. RppH subfamily. A divalent metal cation is required as a cofactor.

Its function is as follows. Accelerates the degradation of transcripts by removing pyrophosphate from the 5'-end of triphosphorylated RNA, leading to a more labile monophosphorylated state that can stimulate subsequent ribonuclease cleavage. This is RNA pyrophosphohydrolase from Teredinibacter turnerae (strain ATCC 39867 / T7901).